A 481-amino-acid polypeptide reads, in one-letter code: Dynein axonemal assembly factor 8 (481 aa).

4 disordered regions span residues 70–91, 131–233, 306–397, and 415–454; these read DESG…LVPG, LDTK…EGRP, TWKV…PVAS, and RAFR…KKHI. Residues serine 83, serine 145, and serine 147 each carry the phosphoserine modification. Residues 144-155 are compositionally biased toward polar residues; that stretch reads GSQSPPWSSQGE. Residues 163–176 are compositionally biased toward basic and acidic residues; sequence GKLKTEPSDTDFKN. Positions 177–188 are enriched in basic residues; it reads SAKRRALRRERR. Residues 198 to 211 show a composition bias toward polar residues; it reads KVTQAAQNPASGDQ. Over residues 310-322 the composition is skewed to basic and acidic residues; that stretch reads SADKLQDTEEQVA. A compositionally biased stretch (polar residues) spans 323–336; it reads RTRSASAESGFQTE. At serine 328 the chain carries Phosphoserine. 2 stretches are compositionally biased toward basic and acidic residues: residues 337–349 and 359–380; these read RVQK…RLKT and RLTE…HSSS.

The protein resides in the dynein axonemal particle. Its subcellular location is the cytoplasm. In cyliated cells, dynein axonemal particle-specific protein required for deployment of ODA to the axoneme. Interacts with outer dynein arm (ODA) subunits. The polypeptide is Dynein axonemal assembly factor 8 (Dnaaf8) (Rattus norvegicus (Rat)).